The following is a 443-amino-acid chain: C4-dicarboxylate transport protein (443 aa).

9 helical membrane-spanning segments follow: residues 17–37 (PFYS…ILLG), 57–77 (LVKM…IAGM), 92–112 (LYFL…ANVV), 139–159 (EQSI…GAFA), 161–181 (GDIL…AMVG), 201–221 (LVGI…AFTI), 234–254 (MLIG…LGAV), 320–340 (IYMT…LSWG), and 368–388 (AATL…ILGI).

Belongs to the dicarboxylate/amino acid:cation symporter (DAACS) (TC 2.A.23) family.

Its subcellular location is the cell inner membrane. In terms of biological role, responsible for the transport of dicarboxylates such as succinate, fumarate, and malate from the periplasm across the membrane. In Rhizobium etli (strain ATCC 51251 / DSM 11541 / JCM 21823 / NBRC 15573 / CFN 42), this protein is C4-dicarboxylate transport protein.